Here is a 72-residue protein sequence, read N- to C-terminus: MSKHKHEWTESVANSGPASILSYCASSILMTVTNKFVVNLDNFNMNFVMLFVQSLVCTVTLCILRIVGVANF.

Over 1-12 (MSKHKHEWTESV) the chain is Cytoplasmic. A helical transmembrane segment spans residues 13–32 (ANSGPASILSYCASSILMTV). Residues 33-46 (TNKFVVNLDNFNMN) are Lumenal-facing. A helical transmembrane segment spans residues 47 to 69 (FVMLFVQSLVCTVTLCILRIVGV). Residues 70–72 (ANF) are Cytoplasmic-facing.

The protein belongs to the TPT transporter family. SLC35D subfamily.

Its subcellular location is the membrane. This is an uncharacterized protein from Saccharomyces cerevisiae (strain RM11-1a) (Baker's yeast).